The chain runs to 207 residues: Outer-membrane lipoprotein carrier protein (207 aa).

The N-terminal stretch at Met-1–Ala-22 is a signal peptide.

It belongs to the LolA family. As to quaternary structure, monomer.

The protein resides in the periplasm. In terms of biological role, participates in the translocation of lipoproteins from the inner membrane to the outer membrane. Only forms a complex with a lipoprotein if the residue after the N-terminal Cys is not an aspartate (The Asp acts as a targeting signal to indicate that the lipoprotein should stay in the inner membrane). This Nitrosospira multiformis (strain ATCC 25196 / NCIMB 11849 / C 71) protein is Outer-membrane lipoprotein carrier protein.